The chain runs to 430 residues: MANVVVVGAQWGDEGKGKIVDWLSERADVIARFQGGHNAGHTLVIDGKVYKLSLLPSGIVRPGKLSVIGNGVVLDPWHLVQEIAKLRADGVEISPQSLMIAENAVLILPLHGELDRARESQNSVAKIGTTGRGIGPAYEDKVGRRAIRVADLADEATLALRVDRLMVHHDALRRGLGIEPVDREALLAQLREIAPQVLPYAKPVWKVMNEMRKAGKRILFEGAQGALLDIDFGTYPYVTSSNVIAGQAATGTGIGPGAIGFVLGIVKAYTTRVGEGPFPAELQDADGERLGERGREFGTVTGRKRRCGWFDAVLVRQTCATSGVSGIALTKLDVLDGFETLKICVGYELDGERLDHLPIAADQQARCTPIFEELEGWSESTAGARSWADLPGAAVKYVRRIEELIQCPVALLSTSPERDDTILVTDPFED.

Residues 12-18 and 40-42 each bind GTP; these read GDEGKGK and GHT. The active-site Proton acceptor is the Asp-13. Mg(2+)-binding residues include Asp-13 and Gly-40. Residues 13 to 16, 38 to 41, Thr-130, Arg-144, Gln-224, Thr-239, and Arg-303 each bind IMP; these read DEGK and NAGH. Catalysis depends on His-41, which acts as the Proton donor. 299 to 305 lines the substrate pocket; that stretch reads TVTGRKR. GTP contacts are provided by residues Arg-305, 331–333, and 413–415; these read KLD and STS.

The protein belongs to the adenylosuccinate synthetase family. As to quaternary structure, homodimer. Mg(2+) serves as cofactor.

Its subcellular location is the cytoplasm. The catalysed reaction is IMP + L-aspartate + GTP = N(6)-(1,2-dicarboxyethyl)-AMP + GDP + phosphate + 2 H(+). It participates in purine metabolism; AMP biosynthesis via de novo pathway; AMP from IMP: step 1/2. Functionally, plays an important role in the de novo pathway of purine nucleotide biosynthesis. Catalyzes the first committed step in the biosynthesis of AMP from IMP. This is Adenylosuccinate synthetase from Cereibacter sphaeroides (strain ATCC 17023 / DSM 158 / JCM 6121 / CCUG 31486 / LMG 2827 / NBRC 12203 / NCIMB 8253 / ATH 2.4.1.) (Rhodobacter sphaeroides).